Here is an 80-residue protein sequence, read N- to C-terminus: Exodeoxyribonuclease 7 small subunit (80 aa).

This sequence belongs to the XseB family. Heterooligomer composed of large and small subunits.

It is found in the cytoplasm. It catalyses the reaction Exonucleolytic cleavage in either 5'- to 3'- or 3'- to 5'-direction to yield nucleoside 5'-phosphates.. Bidirectionally degrades single-stranded DNA into large acid-insoluble oligonucleotides, which are then degraded further into small acid-soluble oligonucleotides. This chain is Exodeoxyribonuclease 7 small subunit, found in Salmonella paratyphi B (strain ATCC BAA-1250 / SPB7).